A 380-amino-acid chain; its full sequence is Ribosomal RNA large subunit methyltransferase G (380 aa).

The protein belongs to the methyltransferase superfamily. RlmG family.

It is found in the cytoplasm. It carries out the reaction guanosine(1835) in 23S rRNA + S-adenosyl-L-methionine = N(2)-methylguanosine(1835) in 23S rRNA + S-adenosyl-L-homocysteine + H(+). Functionally, specifically methylates the guanine in position 1835 (m2G1835) of 23S rRNA. In Aeromonas hydrophila subsp. hydrophila (strain ATCC 7966 / DSM 30187 / BCRC 13018 / CCUG 14551 / JCM 1027 / KCTC 2358 / NCIMB 9240 / NCTC 8049), this protein is Ribosomal RNA large subunit methyltransferase G.